A 347-amino-acid polypeptide reads, in one-letter code: NADH-quinone oxidoreductase subunit H (347 aa).

9 consecutive transmembrane segments (helical) span residues 13 to 33 (LLIL…VAYI), 50 to 70 (PNVV…KFVF), 82 to 102 (GVFL…WAVI), 115 to 135 (VGIL…IMAG), 161 to 181 (IGFV…TDIV), 198 to 218 (FLDW…ISAL), 248 to 268 (FLLF…LTTI), 286 to 306 (VPGV…FALV), and 321 to 341 (LGWK…AAFL).

This sequence belongs to the complex I subunit 1 family. As to quaternary structure, NDH-1 is composed of 14 different subunits. Subunits NuoA, H, J, K, L, M, N constitute the membrane sector of the complex.

The protein localises to the cell inner membrane. The catalysed reaction is a quinone + NADH + 5 H(+)(in) = a quinol + NAD(+) + 4 H(+)(out). NDH-1 shuttles electrons from NADH, via FMN and iron-sulfur (Fe-S) centers, to quinones in the respiratory chain. The immediate electron acceptor for the enzyme in this species is believed to be ubiquinone. Couples the redox reaction to proton translocation (for every two electrons transferred, four hydrogen ions are translocated across the cytoplasmic membrane), and thus conserves the redox energy in a proton gradient. This subunit may bind ubiquinone. The polypeptide is NADH-quinone oxidoreductase subunit H (Chelativorans sp. (strain BNC1)).